The chain runs to 98 residues: Integration host factor subunit beta (98 aa).

It belongs to the bacterial histone-like protein family. Heterodimer of an alpha and a beta chain.

This protein is one of the two subunits of integration host factor, a specific DNA-binding protein that functions in genetic recombination as well as in transcriptional and translational control. This is Integration host factor subunit beta from Hahella chejuensis (strain KCTC 2396).